The primary structure comprises 237 residues: Purine nucleoside phosphorylase DeoD-type (237 aa).

H4 serves as a coordination point for a purine D-ribonucleoside. Phosphate is bound by residues G20, R24, R43, and 87–90; that span reads RVGT. A purine D-ribonucleoside-binding positions include 179–181 and 203–204; these read EME and SD. The active-site Proton donor is the D204.

The protein belongs to the PNP/UDP phosphorylase family. In terms of assembly, homohexamer; trimer of homodimers.

It catalyses the reaction a purine D-ribonucleoside + phosphate = a purine nucleobase + alpha-D-ribose 1-phosphate. The enzyme catalyses a purine 2'-deoxy-D-ribonucleoside + phosphate = a purine nucleobase + 2-deoxy-alpha-D-ribose 1-phosphate. Functionally, catalyzes the reversible phosphorolytic breakdown of the N-glycosidic bond in the beta-(deoxy)ribonucleoside molecules, with the formation of the corresponding free purine bases and pentose-1-phosphate. The protein is Purine nucleoside phosphorylase DeoD-type of Streptococcus gordonii (strain Challis / ATCC 35105 / BCRC 15272 / CH1 / DL1 / V288).